The primary structure comprises 424 residues: Calreticulin (424 aa).

The N-terminal stretch at 1 to 29 is a signal peptide; it reads MAIRARSSSYAAAAVALALALASVAAVAG. Asn-61 carries N-linked (GlcNAc...) asparagine glycosylation. An intrachain disulfide couples Cys-115 to Cys-147. Positions 119, 121, 138, and 145 each coordinate an alpha-D-glucoside. Tandem repeats lie at residues 201 to 212, 220 to 231, 237 to 248, 255 to 266, 270 to 280, 284 to 294, and 298 to 308. Residues 201–266 form a 4 X approximate repeats region; the sequence is KQSGSIYEHW…DAKKPEDWDD (66 aa). Residues 217–262 show a composition bias toward basic and acidic residues; it reads QIKDPEAKKPEDWDDKEYIPDPEDKKPEGYDDIPKEIPDPDAKKPE. Residues 217–289 form a disordered region; the sequence is QIKDPEAKKP…PEYKGPWKQK (73 aa). The tract at residues 270-308 is 3 X approximate repeats; sequence GEWTAPTIPNPEYKGPWKQKKIKNPNYQGKWKAPMIDNP. Position 328 (Glu-328) interacts with an alpha-D-glucoside. A compositionally biased stretch (basic and acidic residues) spans 356 to 385; sequence ETWGKHKDAEKAAFDEAEKKKEEEEAAKAG. The interval 356-424 is disordered; sequence ETWGKHKDAE…DSDDEKHDEL (69 aa). A compositionally biased stretch (acidic residues) spans 386 to 401; sequence EDDDDLDDEDAEDEDK. The segment covering 402 to 424 has biased composition (basic and acidic residues); that stretch reads ADEKADSDAEDGKDSDDEKHDEL. A Prevents secretion from ER motif is present at residues 421 to 424; that stretch reads HDEL.

Belongs to the calreticulin family. Phosphorylated.

The protein resides in the endoplasmic reticulum lumen. In terms of biological role, molecular calcium-binding chaperone promoting folding, oligomeric assembly and quality control in the ER via the calreticulin/calnexin cycle. This lectin may interact transiently with almost all of the monoglucosylated glycoproteins that are synthesized in the ER. In Oryza sativa subsp. japonica (Rice), this protein is Calreticulin.